The sequence spans 256 residues: Probable transcriptional regulatory protein A1I_03240 (256 aa).

The disordered stretch occupies residues 1–21 (MAGHSKFKNIQHRKGAQDKKR).

It belongs to the TACO1 family.

The protein localises to the cytoplasm. The sequence is that of Probable transcriptional regulatory protein A1I_03240 from Rickettsia bellii (strain OSU 85-389).